The following is a 678-amino-acid chain: RNA helicase NPH-II (678 aa).

The Helicase ATP-binding domain occupies phenylalanine 175–histidine 351. Residue glycine 188–threonine 195 coordinates ATP. The DEXH box motif lies at aspartate 300–histidine 303. A Helicase C-terminal domain is found at serine 371 to leucine 546.

The protein belongs to the DEAD box helicase family. DEAH subfamily. Monomer.

The protein resides in the virion. The catalysed reaction is ATP + H2O = ADP + phosphate + H(+). Its function is as follows. NTP-dependent helicase that catalyzes unidirectional unwinding of 3'tailed duplex RNAs and plays an important role during transcription of early mRNAs, presumably by preventing R-loop formation behind the elongating RNA polymerase. Might also play a role in the export of newly synthesized mRNA chains out of the core into the cytoplasm. Required for replication and propagation of viral particles. The chain is RNA helicase NPH-II (OPG084) from Oryctolagus cuniculus (Rabbit).